Consider the following 363-residue polypeptide: Anhydro-N-acetylmuramic acid kinase (363 aa).

10–17 (GTSLDGLD) is a binding site for ATP.

This sequence belongs to the anhydro-N-acetylmuramic acid kinase family.

The enzyme catalyses 1,6-anhydro-N-acetyl-beta-muramate + ATP + H2O = N-acetyl-D-muramate 6-phosphate + ADP + H(+). Its pathway is amino-sugar metabolism; 1,6-anhydro-N-acetylmuramate degradation. The protein operates within cell wall biogenesis; peptidoglycan recycling. Functionally, catalyzes the specific phosphorylation of 1,6-anhydro-N-acetylmuramic acid (anhMurNAc) with the simultaneous cleavage of the 1,6-anhydro ring, generating MurNAc-6-P. Is required for the utilization of anhMurNAc either imported from the medium or derived from its own cell wall murein, and thus plays a role in cell wall recycling. This Pseudomonas fluorescens (strain Pf0-1) protein is Anhydro-N-acetylmuramic acid kinase.